The primary structure comprises 73 residues: DNA-directed RNA polymerase subunit epsilon (73 aa).

The protein belongs to the RNA polymerase subunit epsilon family. In terms of assembly, RNAP is composed of a core of 2 alpha, a beta and a beta' subunit. The core is associated with a delta subunit, and at least one of epsilon or omega. When a sigma factor is associated with the core the holoenzyme is formed, which can initiate transcription.

The enzyme catalyses RNA(n) + a ribonucleoside 5'-triphosphate = RNA(n+1) + diphosphate. In terms of biological role, a non-essential component of RNA polymerase (RNAP). In Lactobacillus acidophilus (strain ATCC 700396 / NCK56 / N2 / NCFM), this protein is DNA-directed RNA polymerase subunit epsilon.